Here is a 309-residue protein sequence, read N- to C-terminus: Protein FdhE homolog (309 aa).

The protein belongs to the FdhE family.

The protein resides in the cytoplasm. Necessary for formate dehydrogenase activity. The polypeptide is Protein FdhE homolog (Serratia proteamaculans (strain 568)).